The primary structure comprises 423 residues: Diaminobutyrate--2-oxoglutarate transaminase (423 aa).

An N6-(pyridoxal phosphate)lysine modification is found at lysine 271.

Belongs to the class-III pyridoxal-phosphate-dependent aminotransferase family. Requires pyridoxal 5'-phosphate as cofactor.

It catalyses the reaction L-2,4-diaminobutanoate + 2-oxoglutarate = L-aspartate 4-semialdehyde + L-glutamate. It functions in the pathway amine and polyamine biosynthesis; ectoine biosynthesis; L-ectoine from L-aspartate 4-semialdehyde: step 1/3. Catalyzes reversively the conversion of L-aspartate beta-semialdehyde (ASA) to L-2,4-diaminobutyrate (DABA) by transamination with L-glutamate. The chain is Diaminobutyrate--2-oxoglutarate transaminase (ectB) from Streptomyces coelicolor (strain ATCC BAA-471 / A3(2) / M145).